Reading from the N-terminus, the 351-residue chain is Nicotinate-nucleotide--dimethylbenzimidazole phosphoribosyltransferase (351 aa).

Glu-313 (proton acceptor) is an active-site residue.

Belongs to the CobT family.

It carries out the reaction 5,6-dimethylbenzimidazole + nicotinate beta-D-ribonucleotide = alpha-ribazole 5'-phosphate + nicotinate + H(+). The protein operates within nucleoside biosynthesis; alpha-ribazole biosynthesis; alpha-ribazole from 5,6-dimethylbenzimidazole: step 1/2. Its function is as follows. Catalyzes the synthesis of alpha-ribazole-5'-phosphate from nicotinate mononucleotide (NAMN) and 5,6-dimethylbenzimidazole (DMB). The protein is Nicotinate-nucleotide--dimethylbenzimidazole phosphoribosyltransferase of Mycobacterium leprae (strain Br4923).